A 650-amino-acid polypeptide reads, in one-letter code: Acetyl-coenzyme A synthetase (650 aa).

CoA is bound by residues 191 to 194 (RGGR), Thr311, and Asn335. ATP contacts are provided by residues 387-389 (GEP), 411-416 (DTWWQT), Asp500, and Arg515. Ser523 serves as a coordination point for CoA. Arg526 serves as a coordination point for ATP. 3 residues coordinate Mg(2+): Val537, His539, and Val542. Residue Arg584 coordinates CoA. Lys609 is modified (N6-acetyllysine).

Belongs to the ATP-dependent AMP-binding enzyme family. Mg(2+) serves as cofactor. Post-translationally, acetylated. Deacetylation by the SIR2-homolog deacetylase activates the enzyme.

It carries out the reaction acetate + ATP + CoA = acetyl-CoA + AMP + diphosphate. Catalyzes the conversion of acetate into acetyl-CoA (AcCoA), an essential intermediate at the junction of anabolic and catabolic pathways. AcsA undergoes a two-step reaction. In the first half reaction, AcsA combines acetate with ATP to form acetyl-adenylate (AcAMP) intermediate. In the second half reaction, it can then transfer the acetyl group from AcAMP to the sulfhydryl group of CoA, forming the product AcCoA. The protein is Acetyl-coenzyme A synthetase of Shewanella sediminis (strain HAW-EB3).